We begin with the raw amino-acid sequence, 458 residues long: UDP-N-acetylmuramoylalanine--D-glutamate ligase (458 aa).

124 to 130 (GSDGKTT) is an ATP binding site.

Belongs to the MurCDEF family.

It localises to the cytoplasm. It carries out the reaction UDP-N-acetyl-alpha-D-muramoyl-L-alanine + D-glutamate + ATP = UDP-N-acetyl-alpha-D-muramoyl-L-alanyl-D-glutamate + ADP + phosphate + H(+). It functions in the pathway cell wall biogenesis; peptidoglycan biosynthesis. Its function is as follows. Cell wall formation. Catalyzes the addition of glutamate to the nucleotide precursor UDP-N-acetylmuramoyl-L-alanine (UMA). The sequence is that of UDP-N-acetylmuramoylalanine--D-glutamate ligase from Clostridium botulinum (strain ATCC 19397 / Type A).